The sequence spans 189 residues: Peptidyl-tRNA hydrolase (189 aa).

TRNA is bound at residue Y15. The Proton acceptor role is filled by H20. TRNA is bound by residues F66, N68, and N114.

It belongs to the PTH family. In terms of assembly, monomer.

It localises to the cytoplasm. The enzyme catalyses an N-acyl-L-alpha-aminoacyl-tRNA + H2O = an N-acyl-L-amino acid + a tRNA + H(+). In terms of biological role, hydrolyzes ribosome-free peptidyl-tRNAs (with 1 or more amino acids incorporated), which drop off the ribosome during protein synthesis, or as a result of ribosome stalling. Its function is as follows. Catalyzes the release of premature peptidyl moieties from peptidyl-tRNA molecules trapped in stalled 50S ribosomal subunits, and thus maintains levels of free tRNAs and 50S ribosomes. The sequence is that of Peptidyl-tRNA hydrolase from Streptococcus suis (strain 98HAH33).